The primary structure comprises 311 residues: Aspartate carbamoyltransferase catalytic subunit (311 aa).

Carbamoyl phosphate contacts are provided by R59 and T60. K87 lines the L-aspartate pocket. 3 residues coordinate carbamoyl phosphate: R109, H139, and Q142. The L-aspartate site is built by R172 and R224. A265 and P266 together coordinate carbamoyl phosphate.

Belongs to the aspartate/ornithine carbamoyltransferase superfamily. ATCase family. Heterododecamer (2C3:3R2) of six catalytic PyrB chains organized as two trimers (C3), and six regulatory PyrI chains organized as three dimers (R2).

It carries out the reaction carbamoyl phosphate + L-aspartate = N-carbamoyl-L-aspartate + phosphate + H(+). Its pathway is pyrimidine metabolism; UMP biosynthesis via de novo pathway; (S)-dihydroorotate from bicarbonate: step 2/3. Functionally, catalyzes the condensation of carbamoyl phosphate and aspartate to form carbamoyl aspartate and inorganic phosphate, the committed step in the de novo pyrimidine nucleotide biosynthesis pathway. This Streptococcus pyogenes serotype M4 (strain MGAS10750) protein is Aspartate carbamoyltransferase catalytic subunit.